The sequence spans 192 residues: Lumican (192 aa).

9 LRR repeats span residues leucine 1–lysine 23, glutamine 26–lysine 46, serine 47–leucine 68, asparagine 69–lysine 90, serine 94–alanine 114, serine 115–arginine 136, glycine 139–isoleucine 162, serine 164–leucine 185, and glutamate 186–valine 192.

Belongs to the small leucine-rich proteoglycan (SLRP) family. SLRP class II subfamily. Binds to laminin. In terms of processing, sulfated on tyrosine residue(s). Contains keratan sulfate.

Its subcellular location is the secreted. The protein localises to the extracellular space. It is found in the extracellular matrix. The protein is Lumican (LUM) of Oryctolagus cuniculus (Rabbit).